A 148-amino-acid polypeptide reads, in one-letter code: uncharacterized protein (148 aa).

An N-terminal signal peptide occupies residues 1-18 (MKIILTVLAGVGLLSAGG). Cys-19 is lipidated: N-palmitoyl cysteine. Cys-19 carries S-diacylglycerol cysteine lipidation.

The protein resides in the cell membrane. This is an uncharacterized protein from Bacillus subtilis (strain 168).